The primary structure comprises 338 residues: DNA-directed RNA polymerase subunit alpha (338 aa).

The tract at residues 1–226 (MLIAQRPTLS…ELFGLARELN (226 aa)) is alpha N-terminal domain (alpha-NTD). The alpha C-terminal domain (alpha-CTD) stretch occupies residues 240 to 338 (DEQLAADLAL…DDAFVEDEQY (99 aa)).

The protein belongs to the RNA polymerase alpha chain family. In terms of assembly, homodimer. The RNAP catalytic core consists of 2 alpha, 1 beta, 1 beta' and 1 omega subunit. When a sigma factor is associated with the core the holoenzyme is formed, which can initiate transcription.

The catalysed reaction is RNA(n) + a ribonucleoside 5'-triphosphate = RNA(n+1) + diphosphate. DNA-dependent RNA polymerase catalyzes the transcription of DNA into RNA using the four ribonucleoside triphosphates as substrates. The chain is DNA-directed RNA polymerase subunit alpha from Nocardioides sp. (strain ATCC BAA-499 / JS614).